A 159-amino-acid chain; its full sequence is Putative polyketide cyclase (159 aa).

The protein to polyketide cyclases.

In terms of biological role, involved in developmentally regulated synthesis of a compound biosynthetically related to polyketide antibiotics which is essential for spore color in Streptomyces coelicolor. The protein is Putative polyketide cyclase of Streptomyces coelicolor (strain ATCC BAA-471 / A3(2) / M145).